Consider the following 714-residue polypeptide: Kinesin-like protein KIN-13 (714 aa).

In terms of domain architecture, SAM spans 1–63 (MSDLVYQWLE…FRLITTLKSR (63 aa)). Residues 69–81 (QQPSAPNTGATPQ) are compositionally biased toward polar residues. 2 disordered regions span residues 69-109 (QQPS…NDIQ) and 122-161 (GGYE…NPRG). The span at 82–92 (SVPSSHVSPHV) shows a compositional bias: low complexity. A compositionally biased stretch (pro residues) spans 151–160 (PNAPNPPNPR). In terms of domain architecture, Kinesin motor spans 183–515 (RIRVVIRKRP…LRYADRVKEL (333 aa)). 273-280 (GQTGSGKS) serves as a coordination point for ATP.

This sequence belongs to the TRAFAC class myosin-kinesin ATPase superfamily. Kinesin family. KIN-13 subfamily. As to quaternary structure, interacts with PLK. Post-translationally, phosphorylated by PLK.

It is found in the cytoplasm. It localises to the cytoskeleton. Its subcellular location is the cell projection. The protein localises to the cilium. The protein resides in the flagellum. It is found in the flagellum basal body. It localises to the flagellum axoneme. Its subcellular location is the spindle. The protein localises to the chromosome. The protein resides in the centromere. It is found in the kinetochore. Functionally, involved in cell cycle. Involved in formation of flagella, regulation of flagellar length, and formation of median bodies during interphase. Regulates flagellar length in all eight distal flagellar tips by promoting disassembly of the microtubules. Disassembles microtubules at the distal flagellar tips in a length-dependent manner in order to maintain different equilibrium lengths of the four flagellar pairs. Regulates interphase and mitotic microtubule dynamics. Regulates microtubule disassembly dynamics of the dual mitotic spindles and the median body. This is Kinesin-like protein KIN-13 from Giardia intestinalis (strain ATCC 50803 / WB clone C6) (Giardia lamblia).